The sequence spans 78 residues: cAMP-dependent protein kinase inhibitor beta (78 aa).

Positions M1 to D10 are enriched in basic and acidic residues. Residues M1–K78 are disordered. The segment covering I33–T42 has biased composition (polar residues). Residues S53–K78 show a composition bias toward basic and acidic residues.

Belongs to the PKI family.

In terms of biological role, extremely potent competitive inhibitor of cAMP-dependent protein kinase activity, this protein interacts with the catalytic subunit of the enzyme after the cAMP-induced dissociation of its regulatory chains. This is cAMP-dependent protein kinase inhibitor beta (PKIB) from Homo sapiens (Human).